Here is a 112-residue protein sequence, read N- to C-terminus: uncharacterized protein (112 aa).

2 consecutive transmembrane segments (helical) span residues 44–63 (VITGIVGYVFVVVYVVLHSL) and 68–90 (LAALAMALVFFAITGEYGGKLVH).

It is found in the cell membrane. This is an uncharacterized protein from Archaeoglobus fulgidus (strain ATCC 49558 / DSM 4304 / JCM 9628 / NBRC 100126 / VC-16).